A 52-amino-acid polypeptide reads, in one-letter code: Alpha-crystallin B chain (52 aa).

It belongs to the small heat shock protein (HSP20) family. Homodimer. Aggregates with homologous proteins, including alpha-A-crystallin and the small heat shock protein HSPB1, to form large heteromeric complexes.

Functionally, may contribute to the transparency and refractive index of the lens. The chain is Alpha-crystallin B chain (CRYAB) from Eudromia elegans (Elegant crested-tinamou).